Reading from the N-terminus, the 1130-residue chain is MHC class II transactivator (1130 aa).

Positions 94–132 (AYANIAELDQYVFQDSQLEGLSKDIFKHIGPDEVIGESM) are required for acetyltransferase activity. The segment at 269 to 303 (PSGFTVHGLPTSPDRPGSTSPFAPSATDLPSMPEP) is disordered. In terms of domain architecture, NACHT spans 414-724 (RVIAVLGKAG…CFLGALWLAL (311 aa)). 420–427 (GKAGQGKS) contacts GTP. LRR repeat units lie at residues 985 to 1008 (SLQH…SQLS), 1016 to 1037 (SLET…KLAE), 1045 to 1066 (SLLR…SLAR), and 1073 to 1093 (SLRV…QQLA).

As to quaternary structure, interacts with ZXDA and ZXDC. Interacts with PML (isoform PML-2). Interacts with TAF7; interaction inhibits CIITA acetyltransferase activity, thereby repressing transcription. In terms of processing, autophosphorylated, affecting interaction with TAF7.

Its subcellular location is the nucleus. The protein resides in the PML body. It carries out the reaction L-seryl-[protein] + ATP = O-phospho-L-seryl-[protein] + ADP + H(+). It catalyses the reaction L-threonyl-[protein] + ATP = O-phospho-L-threonyl-[protein] + ADP + H(+). Essential for transcriptional activity of the HLA class II promoter; activation is via the proximal promoter. Does not bind DNA. May act in a coactivator-like fashion through protein-protein interactions by contacting factors binding to the proximal MHC class II promoter, to elements of the transcription machinery, or both PubMed:8402893, PubMed:7749984,. Alternatively it may activate HLA class II transcription by modifying proteins that bind to the MHC class II promoter. Also mediates enhanced MHC class I transcription; the promoter element requirements for CIITA-mediated transcription are distinct from those of constitutive MHC class I transcription, and CIITA can functionally replace TAF1 at these genes. Activates CD74 transcription. Exhibits intrinsic GTP-stimulated acetyltransferase activity. Exhibits serine/threonine protein kinase activity: can phosphorylate the TFIID component TAF7, the RAP74 subunit of the general transcription factor TFIIF, histone H2B at 'Ser-37' and other histones (in vitro). Has antiviral activity against Ebola virus and coronaviruses, including SARS-CoV-2. Induces resistance by up-regulation of the p41 isoform of CD74, which blocks cathepsin-mediated cleavage of viral glycoproteins, thereby preventing viral fusion. Its function is as follows. Exhibits dominant-negative suppression of MHC class II gene expression. This chain is MHC class II transactivator, found in Homo sapiens (Human).